The following is a 381-amino-acid chain: N-acetyldiaminopimelate deacetylase (381 aa).

Residue Asp-73 is part of the active site. Glu-132 (proton acceptor) is an active-site residue.

Belongs to the peptidase M20A family. N-acetyldiaminopimelate deacetylase subfamily.

The catalysed reaction is N-acetyl-(2S,6S)-2,6-diaminopimelate + H2O = (2S,6S)-2,6-diaminopimelate + acetate. The protein operates within amino-acid biosynthesis; L-lysine biosynthesis via DAP pathway; LL-2,6-diaminopimelate from (S)-tetrahydrodipicolinate (acetylase route): step 3/3. Catalyzes the conversion of N-acetyl-diaminopimelate to diaminopimelate and acetate. In Limosilactobacillus reuteri (strain DSM 20016) (Lactobacillus reuteri), this protein is N-acetyldiaminopimelate deacetylase.